The sequence spans 379 residues: Putative cyclic ADP-D-ribose synthase TIR2 (379 aa).

One can recognise a TIR domain in the interval 254–379; the sequence is KVYDVFISHS…TISWTTGLVK (126 aa). Residue glutamate 335 is part of the active site.

Homodimer.

The protein resides in the cytoplasm. With respect to regulation, activated upon phage infection. Functionally, one of 2 TIR-like protein components of the Thoeris antiviral defense system, composed of ThsA, TIR1 (thsB1) and TIR2 (thsB2). Phage infection activates this protein; by 70 minutes post-infection with phage SPO1, TIR2 generates a signal molecule that in turn activates the NAD(+) hydrolase activity of ThsA (tested with B.cereus). The signal is similar to cyclic ADP-D-ribose, but how it differs is unknown. Expression of Thoeris in B.subtilis (strain BEST7003) confers resistance to phages phi29, phi3T, SPBeta, SBSphi11, SBSphi13, SBSphiJ, SPO1 and SPR but not SBSphiC. The TIR paralogs confer resistance to different phages; this subunit confers resistance to phi3T, SPBeta, SBSphi13, SBSphiJ, SPO1 and SPR but not phi29, SBSphi11 or SBSphiC. There is overlap in the phage range for this system, both TIR1 and TIR2 are activated by SBSphi13, SBSphiJ, SPO1 and SPR. Probably hydrolyzes NAD(+) to make a cyclic ADP-D-ribose (cADPR) signaling molecule; might make 3'cADPR. The protein is Putative cyclic ADP-D-ribose synthase TIR2 of Cytobacillus dafuensis (Bacillus dafuensis).